Here is a 778-residue protein sequence, read N- to C-terminus: Dapper homolog 1 (778 aa).

2 stretches are compositionally biased toward basic and acidic residues: residues 1 to 10 and 18 to 40; these read MKPDAAREPE and AEAE…TRER. The interval 1-40 is disordered; that stretch reads MKPDAAREPEPLSPGRGAEAEGRWRERGEADTERQRTRER. The interval 85–149 is required for self-association; sequence DAAQRSRLEE…SEEHLETDSR (65 aa). The stretch at 85 to 149 forms a coiled coil; sequence DAAQRSRLEE…SEEHLETDSR (65 aa). The short motif at 125–134 is the Nuclear export signal element; that stretch reads LDKQISDLRL. 6 disordered regions span residues 305–324, 359–386, 397–416, 428–468, 544–616, and 694–721; these read KTHP…DPTK, GGIT…QLES, AGAA…KAAS, ESMK…SQKN, EKPR…HKRT, and NCFG…SEES. Over residues 375 to 386 the composition is skewed to basic and acidic residues; the sequence is RSKDSKTDQLES. Positions 432–443 are enriched in polar residues; that stretch reads ESNQASAVSPKT. Positions 551–564 match the Bipartite nuclear localization signal motif; it reads KKCRFPDDSDTNKK. Basic and acidic residues predominate over residues 554-563; the sequence is RFPDDSDTNK. A compositionally biased stretch (basic residues) spans 564–574; sequence KFRKTSAKGRR. The segment covering 694 to 704 has biased composition (polar residues); it reads NCFGDSESSVS. Residues 768 to 778 carry the PDZ-binding motif; it reads RSGSLKLMTTV. Phosphoserine; by PKA is present on S769.

The protein belongs to the dapper family. Can form homodimers and heterodimers with DACT2 or DACT3. Interacts with CSNK1D, PKA catalytic subunit, PKC-type kinase, CSNK2A1, CSNK2B, DVL1, DLV2, DVAL3, VANGL1, VANGL2, CTNND1 and HDAC1. Interacts with GSK3B; the interaction is indicative for an association of DACT1 with the beta-catenin destruction complex. Interacts with GSK3A. Interacts with YWHAB; the interaction is enhanced by PKA phosphorylating DACT1 at Ser-769. Interacts with CTNNB1. In terms of tissue distribution, expressed in multiple tissues including brain, heart, kidney, liver and testis.

It localises to the cytoplasm. The protein localises to the nucleus. Its subcellular location is the synapse. In terms of biological role, involved in regulation of intracellular signaling pathways during development. Specifically thought to play a role in canonical and/or non-canonical Wnt signaling pathways through interaction with DSH (Dishevelled) family proteins. The activation/inhibition of Wnt signaling may depend on the phosphorylation status. Proposed to regulate the degradation of CTNNB1/beta-catenin, thereby modulating the transcriptional activation of target genes of the Wnt signaling pathway. Its function in stabilizing CTNNB1 may involve inhibition of GSK3B activity. Promotes the membrane localization of CTNNB1. The cytoplasmic form can induce DVL2 degradation via a lysosome-dependent mechanism; the function is inhibited by PKA-induced binding to 14-3-3 proteins, such as YWHAB. Seems to be involved in morphogenesis at the primitive streak by regulating VANGL2 and DVL2; the function seems to be independent of canonical Wnt signaling and rather involves the non-canonical Wnt/planar cell polarity (PCP) pathway. The nuclear form may prevent the formation of LEF1:CTNNB1 complex and recruit HDAC1 to LEF1 at target gene promoters to repress transcription thus antagonizing Wnt signaling. May be involved in positive regulation of fat cell differentiation. During neuronal differentiation may be involved in excitatory synapse organization, and dendrite formation and establishment of spines. This is Dapper homolog 1 (Dact1) from Mus musculus (Mouse).